A 1571-amino-acid chain; its full sequence is MRNNNCNWLIFLLAFILSLTTAYTPDISVVKNNSPAREIKYFDDSSTLLVLRDDHLLISKNDGKSFEEISDIKDPIIYFEMDPTNKNRAFAMTLSQKQYITEDQGNRWRTFEIDLFNGEMASIPKITFNFENPNYLMISNYECPEGQRLNRNCKHRYFYTKDGFKSKPTKLSVDAHVCRFAKSTKTSKIGNSETVFCTVNQLNSYGHIVESHLYNSNDFFQTKNEIKIKPLDSSSGEIIDIKIEEDFMIVVSRMDKFNEKSLINAYVSRDGENFVRADLDIDIKYGVMSFLPSSVSSLFLTIMDYNSRAFQTASFYGSDSSGLHFTKLLDNVAGGNIQKIENIDGAWIANIGVDSNNPYDGDKSLLDNLFGGTYAKDIVSKVSINDGKDWSLIKLNDNSCKIEDDCSLHLWDFTELDGEGKFVTGPTPGILLGVGNKGKNLAHKFDKMKTYVSRDGGVTWDKALDFPAVFAFGDQGNVILAVPYNGKKKYDAAKHFYFSLDQGKSWDKVDLKHPIYPLSILTTIDGTSRKFIIGGIDDSRKSENEYIYSVDFTNAFDGKTCGDDDFEEFVARKSNIDDEPLCIYGHREKFRRRKQDAQCFVNKLFEDVKVIEDPCQCTEHDFECGPGFKLSEKDSANVCVPDRKQLSRLCQSKSELSLPNKVLVEGNKCNMGDKKLEDFVSQETLKCSDYVDGDNGDKQNPNQGDSNQIEVHINDFEGKLAQYQYIAESQDKNAADNIVIKTMDDRVWISNNGGVSFVRVPISDKILGFYAGPIPGQVILITATNLIYVSDDGGATFIKRRIPTQPSPRVDRAIAFHNEKVERFIWFGEECESNGRCTSNAYITDDAGATFNKLMANVKTCDYVGAVLESGDDELIYCSAQNSLDNNKLALFSLKESSSEEPKKVFENIVGYAIAGTYVVVATIDDKKDSLLSKVTVDGDVFADADFPHDLKVEPHQAFTVLDSSSKAIFMHVTTNEKPNFEYGQLLKSNSNGTYFVLALDNVNRNTVGYVDFDKIDGLEGTIIANVVANAQANEGTKNLQTLISHNDGSEWDKLVPPTVDSEGKKYQCTGQPLNKCALHLHGFTERADYRDTFSSGSATGFLIGVGNVGEFLTPMDDSSTATFLSTDGGVTWKEIKKGVYMWEYGDQGTILVLVNAVEETDVLYYSLDEGQTWKEYGFTDYKIKAHDLATVPTDTARKFIIFAQNSKDHRDIQTYTIDFTNIYPRQCQLNLDDPEHDDYEYWSPVHPIGGDKCMFGHESKYLRRANGHTDCFIGSAPLSDGYKLEKNCSCTRRDYECDYNYVRDVNDNTCKLVKGMTSADRKTTMCSKENAFQYFESTGYRKIPLSTCKGGQQFDNWNPKPCPGKEKIFNEYYGREVKGHKLFFLIFIPLIIFLGTVLFVYDRGIRRNGGFKRLGQIRLNDDDDDFNPIENDQIDVVVNKIVKGGVYTVAVLIATVKTIRKIDRMMLEKLGNVIFRRSPGRRNYVSVPNDFDEEEELFGDYQDNLDDELEDAVFNQDDNLVRTPFVDDIEETETEAQQGEQSNPRDERLFDIDDNEEEEQQQEVSKPAPS.

Residues 1–22 form the signal peptide; it reads MRNNNCNWLIFLLAFILSLTTA. The Lumenal segment spans residues 23–1382; that stretch reads YTPDISVVKN…YYGREVKGHK (1360 aa). BNR repeat units follow at residues 451–461, 497–507, 788–797, and 842–852; these read YVSRDGGVTWD, YFSLDQGKSWD, YVSDDGGATF, and YITDDAGATFN. The N-linked (GlcNAc...) asparagine glycan is linked to Asn-992. 2 BNR repeats span residues 1124-1134 and 1165-1175; these read FLSTDGGVTWK and YYSLDEGQTWK. Asn-1288 carries an N-linked (GlcNAc...) asparagine glycan. Residues 1383-1403 form a helical membrane-spanning segment; sequence LFFLIFIPLIIFLGTVLFVYD. Residues 1404-1571 lie on the Cytoplasmic side of the membrane; the sequence is RGIRRNGGFK…QQEVSKPAPS (168 aa). The disordered stretch occupies residues 1527–1571; that stretch reads VDDIEETETEAQQGEQSNPRDERLFDIDDNEEEEQQQEVSKPAPS. Residues 1553-1562 show a composition bias toward acidic residues; that stretch reads IDDNEEEEQQ.

The protein belongs to the VPS10-related sortilin family.

It localises to the golgi apparatus. The protein localises to the trans-Golgi network membrane. The protein resides in the prevacuolar compartment membrane. Functionally, functions as a sorting receptor in the Golgi compartment required for the intracellular sorting and delivery of soluble vacuolar proteins, like carboxypeptidase Y (CPY) and proteinase A. Executes multiple rounds of sorting by cycling between the late Golgi and a prevacuolar endosome-like compartment. This Candida dubliniensis (strain CD36 / ATCC MYA-646 / CBS 7987 / NCPF 3949 / NRRL Y-17841) (Yeast) protein is Vacuolar protein sorting/targeting protein 10 (VPS10).